A 129-amino-acid polypeptide reads, in one-letter code: MAKANVRVRKKVKKNIAEGIAHVHASFNNTIITITDRQGNALSWATSGGAGFKGSRKSTPFAAQVAAEAAGKAAQECGVKNLEVRIKGPGPGRESAVRALNAVGFKITSISDVTPVPHNGCRPPKKRRI.

Belongs to the universal ribosomal protein uS11 family. As to quaternary structure, part of the 30S ribosomal subunit. Interacts with proteins S7 and S18. Binds to IF-3.

In terms of biological role, located on the platform of the 30S subunit, it bridges several disparate RNA helices of the 16S rRNA. Forms part of the Shine-Dalgarno cleft in the 70S ribosome. The sequence is that of Small ribosomal subunit protein uS11 from Methylobacillus flagellatus (strain ATCC 51484 / DSM 6875 / VKM B-1610 / KT).